A 434-amino-acid chain; its full sequence is D-amino acid dehydrogenase (434 aa).

An FAD-binding site is contributed by 3–17; that stretch reads VIVLGSGVIGTTTAY.

It belongs to the DadA oxidoreductase family. Requires FAD as cofactor.

The enzyme catalyses a D-alpha-amino acid + A + H2O = a 2-oxocarboxylate + AH2 + NH4(+). In terms of biological role, oxidative deamination of D-amino acids. This Bordetella bronchiseptica (strain ATCC BAA-588 / NCTC 13252 / RB50) (Alcaligenes bronchisepticus) protein is D-amino acid dehydrogenase.